A 273-amino-acid polypeptide reads, in one-letter code: Shikimate dehydrogenase (NADP(+)) (273 aa).

Residues 15-17 (SQS) and threonine 62 each bind shikimate. The active-site Proton acceptor is lysine 66. Glutamate 78 provides a ligand contact to NADP(+). The shikimate site is built by asparagine 87 and aspartate 102. NADP(+) is bound by residues 127–131 (GAGGA), 151–156 (NRTVTK), and methionine 215. Tyrosine 217 is a binding site for shikimate. Glycine 239 is an NADP(+) binding site.

This sequence belongs to the shikimate dehydrogenase family. In terms of assembly, homodimer.

It carries out the reaction shikimate + NADP(+) = 3-dehydroshikimate + NADPH + H(+). It participates in metabolic intermediate biosynthesis; chorismate biosynthesis; chorismate from D-erythrose 4-phosphate and phosphoenolpyruvate: step 4/7. Its function is as follows. Involved in the biosynthesis of the chorismate, which leads to the biosynthesis of aromatic amino acids. Catalyzes the reversible NADPH linked reduction of 3-dehydroshikimate (DHSA) to yield shikimate (SA). The chain is Shikimate dehydrogenase (NADP(+)) from Laribacter hongkongensis (strain HLHK9).